A 138-amino-acid polypeptide reads, in one-letter code: Acidic phospholipase A2 5 (138 aa).

An N-terminal signal peptide occupies residues 1 to 16; it reads MRTLWIVAVWLIGVEG. Cystine bridges form between cysteine 42-cysteine 131, cysteine 44-cysteine 60, cysteine 59-cysteine 111, cysteine 65-cysteine 138, cysteine 66-cysteine 104, cysteine 73-cysteine 97, and cysteine 91-cysteine 102. Ca(2+) contacts are provided by tyrosine 43, glycine 45, and glycine 47. Histidine 63 is a catalytic residue. Aspartate 64 provides a ligand contact to Ca(2+). Aspartate 105 is a catalytic residue.

It belongs to the phospholipase A2 family. Group II subfamily. D49 sub-subfamily. Ca(2+) is required as a cofactor. As to expression, expressed by the venom gland.

It is found in the secreted. The catalysed reaction is a 1,2-diacyl-sn-glycero-3-phosphocholine + H2O = a 1-acyl-sn-glycero-3-phosphocholine + a fatty acid + H(+). In terms of biological role, PLA2 catalyzes the calcium-dependent hydrolysis of the 2-acyl groups in 3-sn-phosphoglycerides. The chain is Acidic phospholipase A2 5 from Echis ocellatus (Ocellated saw-scaled viper).